We begin with the raw amino-acid sequence, 780 residues long: Replication origin-binding protein (780 aa).

Positions 39–195 (SFENVRQPIK…AAFKPDTQIA (157 aa)) constitute a Helicase ATP-binding domain. Residue 52–59 (AAMGSGKT) coordinates ATP.

This sequence belongs to the herpesviridae OriBP family.

Functionally, probably involved in DNA replication. Binds the origin of replication (ori). In Human herpesvirus 6A (strain Uganda-1102) (HHV-6 variant A), this protein is Replication origin-binding protein (U73).